A 263-amino-acid chain; its full sequence is 3-deoxy-manno-octulosonate cytidylyltransferase (263 aa).

This sequence belongs to the KdsB family.

It is found in the cytoplasm. The enzyme catalyses 3-deoxy-alpha-D-manno-oct-2-ulosonate + CTP = CMP-3-deoxy-beta-D-manno-octulosonate + diphosphate. It participates in nucleotide-sugar biosynthesis; CMP-3-deoxy-D-manno-octulosonate biosynthesis; CMP-3-deoxy-D-manno-octulosonate from 3-deoxy-D-manno-octulosonate and CTP: step 1/1. Its pathway is bacterial outer membrane biogenesis; lipopolysaccharide biosynthesis. Its function is as follows. Activates KDO (a required 8-carbon sugar) for incorporation into bacterial lipopolysaccharide in Gram-negative bacteria. In Burkholderia thailandensis (strain ATCC 700388 / DSM 13276 / CCUG 48851 / CIP 106301 / E264), this protein is 3-deoxy-manno-octulosonate cytidylyltransferase.